Reading from the N-terminus, the 351-residue chain is L-threonine 3-dehydrogenase (351 aa).

C39 is a Zn(2+) binding site. Active-site charge relay system residues include T41 and H44. Zn(2+) is bound by residues H64, E65, C94, C97, C100, and C108. Residues I176, D196, R201, 271-273, and 295-296 each bind NAD(+); these read LGI and IY.

The protein belongs to the zinc-containing alcohol dehydrogenase family. In terms of assembly, homotetramer. Requires Zn(2+) as cofactor.

It is found in the cytoplasm. It catalyses the reaction L-threonine + NAD(+) = (2S)-2-amino-3-oxobutanoate + NADH + H(+). The protein operates within amino-acid degradation; L-threonine degradation via oxydo-reductase pathway; glycine from L-threonine: step 1/2. In terms of biological role, catalyzes the NAD(+)-dependent oxidation of L-threonine to 2-amino-3-ketobutyrate. The protein is L-threonine 3-dehydrogenase of Francisella tularensis subsp. mediasiatica (strain FSC147).